Reading from the N-terminus, the 838-residue chain is Multiphosphoryl transfer protein (838 aa).

Residues 7–147 (APVTPDLVRL…AVIVAALTGD (141 aa)) form the PTS EIIA type-2 domain. Residue histidine 67 is the Tele-phosphohistidine intermediate; for EIIA activity of the active site. Histidine 67 is subject to Phosphohistidine; by HPr. Residues 161 to 253 (AERFEWTIAY…LTAQEKADAE (93 aa)) form the HPr domain. Residue histidine 175 is the Pros-phosphohistidine intermediate; for HPr activity of the active site. Histidine 175 carries the phosphohistidine; by EI modification. The tract at residues 274–838 (AIVGIGASPG…ALEAQREGQA (565 aa)) is PTS EI. The active-site Tele-phosphohistidine intermediate; for PTS EI activity is the histidine 460. Histidine 460 is modified (phosphohistidine; by autocatalysis). Phosphoenolpyruvate-binding residues include arginine 567 and arginine 603. 2 residues coordinate Mg(2+): glutamate 697 and aspartate 721. Phosphoenolpyruvate-binding positions include 720–721 (ND) and arginine 731. The active-site Proton donor is the cysteine 768.

It belongs to the PEP-utilizing enzyme family. It depends on Mg(2+) as a cofactor.

It localises to the cytoplasm. The catalysed reaction is L-histidyl-[protein] + phosphoenolpyruvate = N(pros)-phospho-L-histidyl-[protein] + pyruvate. Its function is as follows. The phosphoenolpyruvate-dependent sugar phosphotransferase system (sugar PTS), a major carbohydrate active transport system, catalyzes the phosphorylation of incoming sugar substrates concomitantly with their translocation across the cell membrane. The enzyme II FruAB PTS system is involved in fructose transport. The sequence is that of Multiphosphoryl transfer protein from Xanthomonas campestris pv. campestris (strain ATCC 33913 / DSM 3586 / NCPPB 528 / LMG 568 / P 25).